Consider the following 393-residue polypeptide: Ribonuclease D (393 aa).

The 3'-5' exonuclease domain occupies 14 to 181 (LITTTEDLTG…VYQLLLERLE (168 aa)). The HRDC domain maps to 219–300 (NRRMLGVLRA…AAARALPDGA (82 aa)).

It belongs to the RNase D family. The cofactor is a divalent metal cation.

The protein localises to the cytoplasm. The enzyme catalyses Exonucleolytic cleavage that removes extra residues from the 3'-terminus of tRNA to produce 5'-mononucleotides.. Its function is as follows. Exonuclease involved in the 3' processing of various precursor tRNAs. Initiates hydrolysis at the 3'-terminus of an RNA molecule and releases 5'-mononucleotides. This chain is Ribonuclease D, found in Gluconacetobacter diazotrophicus (strain ATCC 49037 / DSM 5601 / CCUG 37298 / CIP 103539 / LMG 7603 / PAl5).